Reading from the N-terminus, the 313-residue chain is Homoserine O-succinyltransferase (313 aa).

The Acyl-thioester intermediate role is filled by C142. The substrate site is built by K163 and S192. The active-site Proton acceptor is H235. Residue E237 is part of the active site. Position 249 (R249) interacts with substrate.

The protein belongs to the MetA family.

It is found in the cytoplasm. The enzyme catalyses L-homoserine + succinyl-CoA = O-succinyl-L-homoserine + CoA. It participates in amino-acid biosynthesis; L-methionine biosynthesis via de novo pathway; O-succinyl-L-homoserine from L-homoserine: step 1/1. Its function is as follows. Transfers a succinyl group from succinyl-CoA to L-homoserine, forming succinyl-L-homoserine. The polypeptide is Homoserine O-succinyltransferase (Vibrio atlanticus (strain LGP32) (Vibrio splendidus (strain Mel32))).